The primary structure comprises 301 residues: POU domain, class 6, transcription factor 1 (301 aa).

A run of 2 repeats spans residues 11–17 (NAQGQVI) and 50–56 (NAQGQVI). The interval 11–56 (NAQGQVIGALPWVVNSASVATPAPAQSLQVQAVTPQLLLNAQGQVI) is 2 X 7 AA repeats of N-A-Q-G-Q-V-I. The interval 66–88 (QPVAVRKPSTPESPAKSEVQPIQ) is disordered. A POU-specific domain is found at 139 to 213 (EDGINLEEIR…VLEKWLNEAE (75 aa)). The homeobox DNA-binding region spans 234-293 (KRKRRTSFTPQAIEALNAYFEKNPLPTGQEITEIAKELNYDREVVRVWFCNRRQTLKNTS).

It belongs to the POU transcription factor family. Class-6 subfamily. As to expression, in the embryo, widely expressed, with highest levels in the developing brain and spinal cord. In the adult, mostly found in the brain, where it is diffusely expressed with the exception of an enrichment in layer IV of the neocortex. Also found in kidney, lung, heart, adrenal, skin, and placenta. Low levels in spleen, muscle, liver, anterior pituitary, testis and ovary.

The protein localises to the nucleus. In terms of biological role, transcription factor that binds preferentially to a variant of the octamer motif (5'-ATGATAAT-3'). The chain is POU domain, class 6, transcription factor 1 (Pou6f1) from Rattus norvegicus (Rat).